The sequence spans 237 residues: MPTLVLLRHGQSQWNLENRFTGWVDVDLTAEGEAQARKGGELIAAAGIEIDRLFTSVQTRAIRTGNLALDAAKQSFVPVTKDWRLNERHYGGLTGLNKAETAEKHGVEQVTIWRRSYDIPPPELAPGGEYDFSKDRRYKGASLPSTESLATTLVRVLPYWESDIAPHLKAGETVLIAAHGNSLRAIVKHLFNVPDDQIVGVEIPTGNPLVIDLDAALKPTGARYLDDSRAEALPKVG.

Substrate is bound by residues 8 to 15, 21 to 22, arginine 60, 87 to 90, lysine 98, 114 to 115, and 180 to 181; these read RHGQSQWN, TG, ERHY, RR, and GN. The active-site Tele-phosphohistidine intermediate is histidine 9. Residue glutamate 87 is the Proton donor/acceptor of the active site.

Belongs to the phosphoglycerate mutase family. BPG-dependent PGAM subfamily. As to quaternary structure, homodimer.

It catalyses the reaction (2R)-2-phosphoglycerate = (2R)-3-phosphoglycerate. Its pathway is carbohydrate degradation; glycolysis; pyruvate from D-glyceraldehyde 3-phosphate: step 3/5. Its function is as follows. Catalyzes the interconversion of 2-phosphoglycerate and 3-phosphoglycerate. The protein is 2,3-bisphosphoglycerate-dependent phosphoglycerate mutase of Caulobacter vibrioides (strain ATCC 19089 / CIP 103742 / CB 15) (Caulobacter crescentus).